We begin with the raw amino-acid sequence, 89 residues long: Small ribosomal subunit protein uS15 (89 aa).

The segment covering 1-20 (MSITAERKAELIKTHARGEA) has biased composition (basic and acidic residues). Residues 1–24 (MSITAERKAELIKTHARGEADTGS) form a disordered region.

This sequence belongs to the universal ribosomal protein uS15 family. As to quaternary structure, part of the 30S ribosomal subunit. Forms a bridge to the 50S subunit in the 70S ribosome, contacting the 23S rRNA.

One of the primary rRNA binding proteins, it binds directly to 16S rRNA where it helps nucleate assembly of the platform of the 30S subunit by binding and bridging several RNA helices of the 16S rRNA. Functionally, forms an intersubunit bridge (bridge B4) with the 23S rRNA of the 50S subunit in the ribosome. In Phenylobacterium zucineum (strain HLK1), this protein is Small ribosomal subunit protein uS15.